Reading from the N-terminus, the 670-residue chain is Probable plastid-lipid-associated protein 14, chloroplastic (670 aa).

A chloroplast-targeting transit peptide spans M1–S52. The Protein kinase domain maps to F88–L399.

It belongs to the PAP/fibrillin family. Post-translationally, not autophosphorylated. In terms of tissue distribution, expressed in roots.

It localises to the plastid. It is found in the chloroplast. Functionally, directly regulated by DOF3.6/OBP3; unknown function. The protein is Probable plastid-lipid-associated protein 14, chloroplastic (PAP14) of Arabidopsis thaliana (Mouse-ear cress).